The primary structure comprises 208 residues: Large ribosomal subunit protein bL17 (208 aa).

Residues 122–208 form a disordered region; it reads TEKKKKKPAK…ASEEAPPKTE (87 aa). The span at 151 to 179 shows a compositional bias: low complexity; it reads ADTPAPAAEESAPAKAAEPEAEAAAPEAE.

This sequence belongs to the bacterial ribosomal protein bL17 family. As to quaternary structure, part of the 50S ribosomal subunit. Contacts protein L32.

This Desulfosudis oleivorans (strain DSM 6200 / JCM 39069 / Hxd3) (Desulfococcus oleovorans) protein is Large ribosomal subunit protein bL17.